Reading from the N-terminus, the 83-residue chain is U5-theraphotoxin-Hs1a 5 (83 aa).

Positions 1-21 are cleaved as a signal peptide; it reads MKTSMFLTLTGLVLLFVVCYA. A propeptide spanning residues 22–49 is cleaved from the precursor; it reads SESEEKEFPKELPSSIFAADSDFKVEER. 3 disulfides stabilise this stretch: cysteine 51-cysteine 63, cysteine 56-cysteine 68, and cysteine 62-cysteine 75.

This sequence belongs to the neurotoxin 10 (Hwtx-1) family. 51 (Hntx-8) subfamily. Hntx-8 sub-subfamily. Expressed by the venom gland.

The protein resides in the secreted. Functionally, agglutinates erythrocytes. The sequence is that of U5-theraphotoxin-Hs1a 5 from Cyriopagopus schmidti (Chinese bird spider).